The chain runs to 507 residues: Histidine ammonia-lyase (507 aa).

The segment at residues 141 to 143 (ASG) is a cross-link (5-imidazolinone (Ala-Gly)). S142 carries the post-translational modification 2,3-didehydroalanine (Ser).

Belongs to the PAL/histidase family. Contains an active site 4-methylidene-imidazol-5-one (MIO), which is formed autocatalytically by cyclization and dehydration of residues Ala-Ser-Gly.

It is found in the cytoplasm. It catalyses the reaction L-histidine = trans-urocanate + NH4(+). Its pathway is amino-acid degradation; L-histidine degradation into L-glutamate; N-formimidoyl-L-glutamate from L-histidine: step 1/3. In Burkholderia vietnamiensis (strain G4 / LMG 22486) (Burkholderia cepacia (strain R1808)), this protein is Histidine ammonia-lyase.